A 279-amino-acid polypeptide reads, in one-letter code: Ribosomal RNA small subunit methyltransferase A (279 aa).

S-adenosyl-L-methionine-binding residues include His15, Leu17, Gly42, Glu64, Asp89, and Asn109.

Belongs to the class I-like SAM-binding methyltransferase superfamily. rRNA adenine N(6)-methyltransferase family. RsmA subfamily.

It is found in the cytoplasm. The enzyme catalyses adenosine(1518)/adenosine(1519) in 16S rRNA + 4 S-adenosyl-L-methionine = N(6)-dimethyladenosine(1518)/N(6)-dimethyladenosine(1519) in 16S rRNA + 4 S-adenosyl-L-homocysteine + 4 H(+). In terms of biological role, specifically dimethylates two adjacent adenosines (A1518 and A1519) in the loop of a conserved hairpin near the 3'-end of 16S rRNA in the 30S particle. May play a critical role in biogenesis of 30S subunits. This Prochlorococcus marinus (strain SARG / CCMP1375 / SS120) protein is Ribosomal RNA small subunit methyltransferase A.